The chain runs to 766 residues: Transcription factor GTE4 (766 aa).

Disordered regions lie at residues glycine 87 to aspartate 108, arginine 234 to glutamate 262, and glycine 388 to glycine 412. Polar residues predominate over residues aspartate 238–alanine 250. The region spanning glycine 416–isoleucine 522 is the Bromo domain. 2 disordered regions span residues threonine 544–aspartate 606 and alanine 687–threonine 766. Low complexity predominate over residues proline 574–glycine 589. The 82-residue stretch at proline 597–lysine 678 folds into the NET domain. Positions serine 736–threonine 766 are enriched in low complexity.

As to expression, ubiquitously expressed.

It localises to the nucleus. In terms of biological role, involved in the activation and maintenance of cell division in the meristems and by this controls cell numbers in differentiated organs. Its action in cell cycle regulation may be directed through the RB-E2F pathway. This is Transcription factor GTE4 (GTE4) from Arabidopsis thaliana (Mouse-ear cress).